The sequence spans 109 residues: Somatostatin-2 (109 aa).

The N-terminal stretch at 1–16 (MQFLASLVSFLLVVWS) is a signal peptide. Positions 17–80 (VKATALPVED…EPLENKLEER (64 aa)) are excised as a propeptide. Cys-98 and Cys-109 are oxidised to a cystine.

The protein belongs to the somatostatin family.

Its subcellular location is the secreted. Functionally, somatostatin inhibits the release of somatotropin. The protein is Somatostatin-2 (sst2) of Protopterus annectens (African lungfish).